Consider the following 266-residue polypeptide: Hydroxyacylglutathione hydrolase (266 aa).

Zn(2+)-binding residues include histidine 53, histidine 55, aspartate 57, histidine 58, histidine 118, aspartate 140, and histidine 178.

Belongs to the metallo-beta-lactamase superfamily. Glyoxalase II family. As to quaternary structure, monomer. It depends on Zn(2+) as a cofactor.

The catalysed reaction is an S-(2-hydroxyacyl)glutathione + H2O = a 2-hydroxy carboxylate + glutathione + H(+). It participates in secondary metabolite metabolism; methylglyoxal degradation; (R)-lactate from methylglyoxal: step 2/2. Functionally, thiolesterase that catalyzes the hydrolysis of S-D-lactoyl-glutathione to form glutathione and D-lactic acid. The protein is Hydroxyacylglutathione hydrolase of Cupriavidus taiwanensis (strain DSM 17343 / BCRC 17206 / CCUG 44338 / CIP 107171 / LMG 19424 / R1) (Ralstonia taiwanensis (strain LMG 19424)).